Here is a 302-residue protein sequence, read N- to C-terminus: tRNA-cytidine(32) 2-sulfurtransferase (302 aa).

The PP-loop motif signature appears at 43–48 (SGGKDS). The [4Fe-4S] cluster site is built by Cys-118, Cys-121, and Cys-209.

The protein belongs to the TtcA family. Homodimer. Requires Mg(2+) as cofactor. [4Fe-4S] cluster is required as a cofactor.

Its subcellular location is the cytoplasm. It catalyses the reaction cytidine(32) in tRNA + S-sulfanyl-L-cysteinyl-[cysteine desulfurase] + AH2 + ATP = 2-thiocytidine(32) in tRNA + L-cysteinyl-[cysteine desulfurase] + A + AMP + diphosphate + H(+). It participates in tRNA modification. Its function is as follows. Catalyzes the ATP-dependent 2-thiolation of cytidine in position 32 of tRNA, to form 2-thiocytidine (s(2)C32). The sulfur atoms are provided by the cysteine/cysteine desulfurase (IscS) system. The protein is tRNA-cytidine(32) 2-sulfurtransferase of Polynucleobacter necessarius subsp. necessarius (strain STIR1).